A 124-amino-acid chain; its full sequence is Putative membrane protein insertion efficiency factor (124 aa).

A disordered region spans residues 1-24 (MHDPHGHAHTVRPPGRGRNWPGPW). Low complexity predominate over residues 12-24 (RPPGRGRNWPGPW).

The protein belongs to the UPF0161 family.

The protein resides in the cell inner membrane. In terms of biological role, could be involved in insertion of integral membrane proteins into the membrane. This is Putative membrane protein insertion efficiency factor from Mesorhizobium japonicum (strain LMG 29417 / CECT 9101 / MAFF 303099) (Mesorhizobium loti (strain MAFF 303099)).